The following is a 235-amino-acid chain: Orotidine 5'-phosphate decarboxylase (235 aa).

Residues D10, K33, 60–69 (DLKMSDIPNT), T123, R185, Q194, G214, and R215 contribute to the substrate site. The Proton donor role is filled by K62.

This sequence belongs to the OMP decarboxylase family. Type 1 subfamily. Homodimer.

It carries out the reaction orotidine 5'-phosphate + H(+) = UMP + CO2. Its pathway is pyrimidine metabolism; UMP biosynthesis via de novo pathway; UMP from orotate: step 2/2. Catalyzes the decarboxylation of orotidine 5'-monophosphate (OMP) to uridine 5'-monophosphate (UMP). This is Orotidine 5'-phosphate decarboxylase from Lactobacillus gasseri (strain ATCC 33323 / DSM 20243 / BCRC 14619 / CIP 102991 / JCM 1131 / KCTC 3163 / NCIMB 11718 / NCTC 13722 / AM63).